A 143-amino-acid chain; its full sequence is Large ribosomal subunit protein uL15 (143 aa).

The tract at residues 1–52 is disordered; that stretch reads MKLNTLAPAAGSKSAPKRLGRGIGSGLGKTSGKGHKGQKARSGGYHKVGFEG. The span at 21-31 shows a compositional bias: gly residues; it reads RGIGSGLGKTS.

Belongs to the universal ribosomal protein uL15 family. As to quaternary structure, part of the 50S ribosomal subunit.

Binds to the 23S rRNA. This Francisella tularensis subsp. tularensis (strain FSC 198) protein is Large ribosomal subunit protein uL15.